The following is a 223-amino-acid chain: Ribosomal RNA small subunit methyltransferase G (223 aa).

3 residues coordinate S-adenosyl-L-methionine: Gly-85, Phe-90, and Arg-154.

It belongs to the methyltransferase superfamily. RNA methyltransferase RsmG family.

The protein resides in the cytoplasm. The catalysed reaction is guanosine(527) in 16S rRNA + S-adenosyl-L-methionine = N(7)-methylguanosine(527) in 16S rRNA + S-adenosyl-L-homocysteine. In terms of biological role, specifically methylates the N7 position of guanine in position 527 of 16S rRNA. This is Ribosomal RNA small subunit methyltransferase G from Rhodopseudomonas palustris (strain ATCC BAA-98 / CGA009).